Reading from the N-terminus, the 207-residue chain is Ribosomal RNA large subunit methyltransferase E (207 aa).

Gly-51, Trp-53, Asp-69, Asp-85, and Asp-108 together coordinate S-adenosyl-L-methionine. The Proton acceptor role is filled by Lys-148.

Belongs to the class I-like SAM-binding methyltransferase superfamily. RNA methyltransferase RlmE family.

It localises to the cytoplasm. It carries out the reaction uridine(2552) in 23S rRNA + S-adenosyl-L-methionine = 2'-O-methyluridine(2552) in 23S rRNA + S-adenosyl-L-homocysteine + H(+). Specifically methylates the uridine in position 2552 of 23S rRNA at the 2'-O position of the ribose in the fully assembled 50S ribosomal subunit. This Methanospirillum hungatei JF-1 (strain ATCC 27890 / DSM 864 / NBRC 100397 / JF-1) protein is Ribosomal RNA large subunit methyltransferase E.